Reading from the N-terminus, the 322-residue chain is Phosphatidylserine decarboxylase proenzyme (322 aa).

Residues Asp90, His147, and Ser254 each act as charge relay system; for autoendoproteolytic cleavage activity in the active site. Ser254 (schiff-base intermediate with substrate; via pyruvic acid; for decarboxylase activity) is an active-site residue. Ser254 is modified (pyruvic acid (Ser); by autocatalysis). A disordered region spans residues 293-322; that stretch reads PDAEPAPLPAEEIEAEHDASPLVDDKKDQV. Basic and acidic residues predominate over residues 308–322; that stretch reads EHDASPLVDDKKDQV.

This sequence belongs to the phosphatidylserine decarboxylase family. PSD-B subfamily. Prokaryotic type I sub-subfamily. In terms of assembly, heterodimer of a large membrane-associated beta subunit and a small pyruvoyl-containing alpha subunit. Requires pyruvate as cofactor. Is synthesized initially as an inactive proenzyme. Formation of the active enzyme involves a self-maturation process in which the active site pyruvoyl group is generated from an internal serine residue via an autocatalytic post-translational modification. Two non-identical subunits are generated from the proenzyme in this reaction, and the pyruvate is formed at the N-terminus of the alpha chain, which is derived from the carboxyl end of the proenzyme. The autoendoproteolytic cleavage occurs by a canonical serine protease mechanism, in which the side chain hydroxyl group of the serine supplies its oxygen atom to form the C-terminus of the beta chain, while the remainder of the serine residue undergoes an oxidative deamination to produce ammonia and the pyruvoyl prosthetic group on the alpha chain. During this reaction, the Ser that is part of the protease active site of the proenzyme becomes the pyruvoyl prosthetic group, which constitutes an essential element of the active site of the mature decarboxylase.

It is found in the cell membrane. The catalysed reaction is a 1,2-diacyl-sn-glycero-3-phospho-L-serine + H(+) = a 1,2-diacyl-sn-glycero-3-phosphoethanolamine + CO2. Its pathway is phospholipid metabolism; phosphatidylethanolamine biosynthesis; phosphatidylethanolamine from CDP-diacylglycerol: step 2/2. Its function is as follows. Catalyzes the formation of phosphatidylethanolamine (PtdEtn) from phosphatidylserine (PtdSer). The polypeptide is Phosphatidylserine decarboxylase proenzyme (Escherichia coli O45:K1 (strain S88 / ExPEC)).